Here is a 496-residue protein sequence, read N- to C-terminus: Cytochrome P450 71D18 (496 aa).

The helical; Signal-anchor for type II membrane protein transmembrane segment at 2–22 threads the bilayer; the sequence is ELDLLSAIIILVATYIVSLLI. Cys-436 lines the heme pocket.

This sequence belongs to the cytochrome P450 family. Heme is required as a cofactor.

It localises to the endoplasmic reticulum membrane. It carries out the reaction (4S)-limonene + reduced [NADPH--hemoprotein reductase] + O2 = (1S,5R)-carveol + oxidized [NADPH--hemoprotein reductase] + H2O + H(+). Its function is as follows. Hydroxylates (-)-(4S)-limonene to (-)-trans-carveol, a precursor of (-)-carvone. Fluorinated substrate analogs are hydroxylated with the same regio- and stereochemistry. The sequence is that of Cytochrome P450 71D18 (CYP71D18) from Mentha gracilis (Gingermint).